Here is a 63-residue protein sequence, read N- to C-terminus: Bowman-Birk type proteinase inhibitor (63 aa).

7 cysteine pairs are disulfide-bonded: Cys7-Cys60, Cys8-Cys23, Cys11-Cys56, Cys13-Cys21, Cys30-Cys37, Cys34-Cys49, and Cys39-Cys47.

Monomer.

Its function is as follows. Inhibits trypsin stoichiometrically at the molar ratio of 1:2, with a dissociation constant of 4.2 nM. Does not inhibit chymotrypsin. The sequence is that of Bowman-Birk type proteinase inhibitor from Lupinus albus (White lupine).